The following is a 205-amino-acid chain: Dr1-associated corepressor (205 aa).

One can recognise a Histone-fold domain in the interval 14–77 (PARIKKIMQT…SHLKQCIELE (64 aa)). A disordered region spans residues 91 to 205 (PDMQGDGEDN…EAEDEEDYDS (115 aa)). Basic and acidic residues predominate over residues 98 to 108 (EDNHTDGDKGP). The span at 138 to 155 (SEQEDESEDTDTDGEEET) shows a compositional bias: acidic residues. A compositionally biased stretch (pro residues) spans 172–193 (PPTPFMPFTSPLPLPPAPPGPS). The segment covering 196 to 205 (EAEDEEDYDS) has biased composition (acidic residues).

The protein belongs to the NC2 alpha/DRAP1 family. In terms of assembly, heterodimer with DR1. Binds BTAF1. Post-translationally, phosphorylation reduces DNA binding, but has no effect on heterodimerization and TBP binding.

The protein localises to the nucleus. The association of the DR1/DRAP1 heterodimer with TBP results in a functional repression of both activated and basal transcription of class II genes. This interaction precludes the formation of a transcription-competent complex by inhibiting the association of TFIIA and/or TFIIB with TBP. Can bind to DNA on its own. This Rattus norvegicus (Rat) protein is Dr1-associated corepressor.